The primary structure comprises 196 residues: Imidazoleglycerol-phosphate dehydratase (196 aa).

Belongs to the imidazoleglycerol-phosphate dehydratase family.

It is found in the cytoplasm. It carries out the reaction D-erythro-1-(imidazol-4-yl)glycerol 3-phosphate = 3-(imidazol-4-yl)-2-oxopropyl phosphate + H2O. The protein operates within amino-acid biosynthesis; L-histidine biosynthesis; L-histidine from 5-phospho-alpha-D-ribose 1-diphosphate: step 6/9. The sequence is that of Imidazoleglycerol-phosphate dehydratase from Chlorobium chlorochromatii (strain CaD3).